A 360-amino-acid chain; its full sequence is DNA replication and repair protein RecF (360 aa).

30-37 (GHNGSGKT) serves as a coordination point for ATP.

It belongs to the RecF family.

The protein localises to the cytoplasm. Functionally, the RecF protein is involved in DNA metabolism; it is required for DNA replication and normal SOS inducibility. RecF binds preferentially to single-stranded, linear DNA. It also seems to bind ATP. The sequence is that of DNA replication and repair protein RecF from Shewanella pealeana (strain ATCC 700345 / ANG-SQ1).